The following is a 513-amino-acid chain: ATP synthase subunit alpha (513 aa).

An ATP-binding site is contributed by 169 to 176 (GDRQTGKT).

It belongs to the ATPase alpha/beta chains family. In terms of assembly, F-type ATPases have 2 components, CF(1) - the catalytic core - and CF(0) - the membrane proton channel. CF(1) has five subunits: alpha(3), beta(3), gamma(1), delta(1), epsilon(1). CF(0) has three main subunits: a(1), b(2) and c(9-12). The alpha and beta chains form an alternating ring which encloses part of the gamma chain. CF(1) is attached to CF(0) by a central stalk formed by the gamma and epsilon chains, while a peripheral stalk is formed by the delta and b chains.

The protein resides in the cell inner membrane. The enzyme catalyses ATP + H2O + 4 H(+)(in) = ADP + phosphate + 5 H(+)(out). Its function is as follows. Produces ATP from ADP in the presence of a proton gradient across the membrane. The alpha chain is a regulatory subunit. The sequence is that of ATP synthase subunit alpha from Salmonella paratyphi C (strain RKS4594).